A 1247-amino-acid chain; its full sequence is MTLGSETKTDVEVPIINGKHEIPQEENDSGHSSINTPDSSEPDKQVDKFVKITIQPSCGDAFELHLSDNELVQELYQTLLDREATCHRTCFSLYLNGTAVDNYSEVRAIPGFVDGCTLNVVDEPYTIRDARLHLRQVRELLKFGLTEDQHEPPCTNDAQSYLTTINLQPEEKKEPKPSDILPPDHALPGCKERSLAHLLVPQPKELIALKDIAFSPYNPPPGPRKLRGDVLYIDITTVENRIYHVTCCTRGFYVNNSQDGRFDPTVSNSNKTVYQSVIELLQNVSPGFKKVYPQILKRRQEKTLVERLPTSYPVSSWVGNPLKTDGYMSDSLRAIELTEPFRVGFEDHMPGLLRDWNEELQTTFEMTRKSISERVIRDRSYYKIHADYVNAAARGVQSILDGNILAINPGEDKKTHMYIWNNIFFSLGFDVRDHYKELGGDAAAFAATSTDLQGVRAFATLDDPKLNTLGMAIFDYRGYRVTAQSIIPGILEREQEQSVVYGSIDFGKTVVSDEKYHELLEDAAHKLKMLPHTVISEKDGVKEELKLYTSYEAKGIIGNDGRKYVLDLLRSMPPDVHYLDDAEVSEAAKTLGYPRKFPHKLSALRRELIDAFCESRLVTFIQLTAKKIRDLITESKEKNDETLIKQAAEAETELSLLFMAISEDKEFEAKNKVVQDAIKEACAVVHSIYEDRYVMKFNPDCFSSNVKHAPTENLERQRRVVVDAADFLLTQKIPELVQNLKDCVVQPIDGDNLADIMHINGINIRYLGEIGKRLENSVSFARPLVLSDIVARSAKHVIRKINVQITADQLSASTSHILNCLFSVVLDPSPIAANVAKKANKKNGKKRVTSAWSSLTTSALWNSIREDSASYYGYPIEADSLEKFTELHDIQKTALFRRICKVMGVQLVARDYQLDNSTAKKTSIFVEDDIINFFPIIKHHEPFTADAKKMFIRGQQAMSIGASREAYECIGESLNLMTLVYGVMHPDMPQCLRALARLSHVLGETGDALNNQHKAAVMSERLIGLDAGNTIIEYINLAHFAFGALLIPGSLRPLYRARYLMNLVFGEKHPVMAQIDANIGLILFTVQEFDTALKYLQSADAITKTIGEPRKLKTGLISNLIARTHAARGDFRAALVAEKETFAIYSELYGPNHPRVNESSEYLRTLTQQAVTFQKKMLKLDNSTNITELFQAQPPTVTSLFDTLNIINGILIIGVPGLSSLGKQQNGTTEESKTTDVAAQLDNETLD.

The tract at residues 1–43 (MTLGSETKTDVEVPIINGKHEIPQEENDSGHSSINTPDSSEPD) is disordered. Residues 30 to 39 (GHSSINTPDS) show a composition bias toward polar residues. Positions 329-579 (SDSLRAIELT…RSMPPDVHYL (251 aa)) constitute a Clu domain. Residues 1222 to 1247 (GKQQNGTTEESKTTDVAAQLDNETLD) form a disordered region.

The protein belongs to the CLU family.

The protein localises to the cytoplasm. Functionally, mRNA-binding protein involved in proper cytoplasmic distribution of mitochondria. The sequence is that of Clustered mitochondria protein homolog from Caenorhabditis elegans.